Consider the following 352-residue polypeptide: DNA polymerase IV (352 aa).

One can recognise a UmuC domain in the interval 7-187 (IIHIDMDCFY…LSLKKIPGIG (181 aa)). Mg(2+) is bound by residues Asp11 and Asp105. The active site involves Glu106.

This sequence belongs to the DNA polymerase type-Y family. As to quaternary structure, monomer. Mg(2+) is required as a cofactor.

It localises to the cytoplasm. It carries out the reaction DNA(n) + a 2'-deoxyribonucleoside 5'-triphosphate = DNA(n+1) + diphosphate. Functionally, poorly processive, error-prone DNA polymerase involved in untargeted mutagenesis. Copies undamaged DNA at stalled replication forks, which arise in vivo from mismatched or misaligned primer ends. These misaligned primers can be extended by PolIV. Exhibits no 3'-5' exonuclease (proofreading) activity. May be involved in translesional synthesis, in conjunction with the beta clamp from PolIII. The polypeptide is DNA polymerase IV (Colwellia psychrerythraea (strain 34H / ATCC BAA-681) (Vibrio psychroerythus)).